The chain runs to 835 residues: Peptide transporter family 1 (835 aa).

Transmembrane regions (helical) follow at residues 86–106 (IFFNGFTVLCYTTPLLGSIVA), 113–133 (FWTIFSVSILYAIGQVVLALA), 150–170 (GLLIIAFGTGGIKPCVSAFGG), 183–203 (LFFSMFYFSINAGSMISTFIS), 222–242 (FGIPAILMIVATLVFMGGSFW), 325–345 (MFLPVPMFWALYDQQGSVWLI), 368–388 (LNAVLILLFIPLFQVIIYPVA), 401–421 (VTGGLLASLAFLITGFVQLQV), 697–717 (ILWQIPQIVVITAAEILFSIT), 738–758 (WLLTTAAGDSIIVVITILNLF), and 765–785 (FFVYAAAMFVVIAIFALLSIF). A disordered region spans residues 814 to 835 (PRYSIDNKGFHPDEKDTFDMHF). The span at 821–835 (KGFHPDEKDTFDMHF) shows a compositional bias: basic and acidic residues.

This sequence belongs to the major facilitator superfamily. Proton-dependent oligopeptide transporter (POT/PTR) (TC 2.A.17) family. Expressed specifically in the intestine.

Its subcellular location is the apical cell membrane. Functionally, low-affinity peptide transporter that is necessary for proton-dependent uptake of di- or tripeptides, and to a minor extent tetrapeptides, in the intestine. Transport is independent of sodium and chloride ions. Controls the uptake of dietary fatty acids, plays a role in fatty acid synthesis and is responsible for dipeptide-induced acidification of the intestine. Regulates cellular pH differences together with the antiporter protein, nhx-2. Amino acid uptake and absorption levels influence the insulin signaling/daf-2 and let-363/TOR pathways, subsequently affecting the stress response and longevity of the organism. It is required for the uptake of the L-enantiomers of various amino acids, including L-glutamate. In response to the availability of amino acid nutrients, may play a role in promoting reproduction and fertility. The sequence is that of Peptide transporter family 1 from Caenorhabditis elegans.